An 82-amino-acid chain; its full sequence is Cytochrome b559 subunit alpha (82 aa).

A helical transmembrane segment spans residues 22 to 36; sequence VIHFVTLPSIFLAGF. A heme-binding site is contributed by histidine 24.

It belongs to the PsbE/PsbF family. In terms of assembly, heterodimer of an alpha subunit and a beta subunit. PSII is composed of 1 copy each of membrane proteins PsbA, PsbB, PsbC, PsbD, PsbE, PsbF, PsbH, PsbI, PsbJ, PsbK, PsbL, PsbM, PsbT, PsbX, PsbY, PsbZ, Psb30/Ycf12, peripheral proteins PsbO, CyanoQ (PsbQ), PsbU, PsbV and a large number of cofactors. It forms dimeric complexes. Heme b is required as a cofactor.

The protein resides in the cellular thylakoid membrane. Functionally, this b-type cytochrome is tightly associated with the reaction center of photosystem II (PSII). PSII is a light-driven water:plastoquinone oxidoreductase that uses light energy to abstract electrons from H(2)O, generating O(2) and a proton gradient subsequently used for ATP formation. It consists of a core antenna complex that captures photons, and an electron transfer chain that converts photonic excitation into a charge separation. The polypeptide is Cytochrome b559 subunit alpha (Parasynechococcus marenigrum (strain WH8102)).